Consider the following 365-residue polypeptide: Aminomethyltransferase (365 aa).

It belongs to the GcvT family. In terms of assembly, the glycine cleavage system is composed of four proteins: P, T, L and H.

The enzyme catalyses N(6)-[(R)-S(8)-aminomethyldihydrolipoyl]-L-lysyl-[protein] + (6S)-5,6,7,8-tetrahydrofolate = N(6)-[(R)-dihydrolipoyl]-L-lysyl-[protein] + (6R)-5,10-methylene-5,6,7,8-tetrahydrofolate + NH4(+). Functionally, the glycine cleavage system catalyzes the degradation of glycine. This chain is Aminomethyltransferase, found in Erwinia tasmaniensis (strain DSM 17950 / CFBP 7177 / CIP 109463 / NCPPB 4357 / Et1/99).